Reading from the N-terminus, the 349-residue chain is 1-acylglycerol-3-phosphate O-acyltransferase ABHD5 (349 aa).

Ala2 carries the N-acetylalanine modification. One can recognise an AB hydrolase-1 domain in the interval 77–185; the sequence is PLVLLHGFGG…VEPWGFPERP (109 aa). Positions 327-332 match the HXXXXD motif motif; the sequence is HYVYAD.

Belongs to the peptidase S33 family. ABHD4/ABHD5 subfamily. As to quaternary structure, interacts with ADRP, PLIN and PNPLA2. Interacts with PLIN5; promotes interaction with PNPLA2.

It localises to the cytoplasm. The protein localises to the lipid droplet. It carries out the reaction a 1-acyl-sn-glycero-3-phosphate + an acyl-CoA = a 1,2-diacyl-sn-glycero-3-phosphate + CoA. It catalyses the reaction 1-(9Z-octadecenoyl)-sn-glycero-3-phosphate + (9Z)-octadecenoyl-CoA = 1,2-di-(9Z-octadecenoyl)-sn-glycero-3-phosphate + CoA. The catalysed reaction is 1-(9Z-octadecenoyl)-sn-glycero-3-phosphate + hexadecanoyl-CoA = 1-(9Z)-octadecenoyl-2-hexadecanoyl-sn-glycero-3-phosphate + CoA. The enzyme catalyses 1-(9Z-octadecenoyl)-sn-glycero-3-phosphate + octadecanoyl-CoA = 1-(9Z-octadecenoyl)-2-octadecanoyl-sn-glycero-3-phosphate + CoA. It carries out the reaction 1-(9Z-octadecenoyl)-sn-glycero-3-phosphate + (5Z,8Z,11Z,14Z)-eicosatetraenoyl-CoA = 1-(9Z)-octadecenoyl-2-(5Z,8Z,11Z,14Z)-eicosatetraenoyl-sn-glycero-3-phosphate + CoA. It catalyses the reaction eicosanoyl-CoA + 1-(9Z-octadecenoyl)-sn-glycero-3-phosphate = 1-(9Z)-octadecenoyl-2-eicosanoyl-sn-glycero-3-phosphate + CoA. The catalysed reaction is 1-hexadecanoyl-sn-glycero-3-phosphate + (9Z)-octadecenoyl-CoA = 1-hexadecanoyl-2-(9Z-octadecenoyl)-sn-glycero-3-phosphate + CoA. The enzyme catalyses 1-octadecanoyl-sn-glycero-3-phosphate + (9Z)-octadecenoyl-CoA = 1-octadecanoyl-2-(9Z-octadecenoyl)-sn-glycero-3-phosphate + CoA. It carries out the reaction 1-(5Z,8Z,11Z,14Z-eicosatetraenoyl)-sn-glycero-3-phosphate + (9Z)-octadecenoyl-CoA = 1-(5Z,8Z,11Z,14Z)-eicosatetraenoyl-2-(9Z)-octadecenoyl-sn-glycero-3-phosphate + CoA. Acyltransferase activity is inhibited by detergents such as Triton X-100 and 3-[(3-cholamidopropyl)dimethylammonio]-1-propanesulfonate (CHAPS). Acyltransferase activity is inhibited by the presence of magnesium and calcium. In terms of biological role, coenzyme A-dependent lysophosphatidic acid acyltransferase that catalyzes the transfer of an acyl group on a lysophosphatidic acid. Functions preferentially with 1-oleoyl-lysophosphatidic acid followed by 1-palmitoyl-lysophosphatidic acid, 1-stearoyl-lysophosphatidic acid and 1-arachidonoyl-lysophosphatidic acid as lipid acceptor. Functions preferentially with arachidonoyl-CoA followed by oleoyl-CoA as acyl group donors. Functions in phosphatidic acid biosynthesis. May regulate the cellular storage of triacylglycerol through activation of the phospholipase PNPLA2. Involved in keratinocyte differentiation. Regulates lipid droplet fusion. This is 1-acylglycerol-3-phosphate O-acyltransferase ABHD5 from Sus scrofa (Pig).